The chain runs to 491 residues: Cell division control protein 1 (491 aa).

The disordered stretch occupies residues 1–33 (MVYRNRSKSVLSTHSKKSDDKAHYKSRSKKKSK). Residues 1–39 (MVYRNRSKSVLSTHSKKSDDKAHYKSRSKKKSKSRSKKR) lie on the Cytoplasmic side of the membrane. Basic residues predominate over residues 24 to 33 (YKSRSKKKSK). A helical membrane pass occupies residues 40-60 (LRIYWRYISIVWILWLGLISY). At 61–391 (YESVVVKRAM…LCYMPDPYKA (331 aa)) the chain is on the extracellular side. A divalent metal cation-binding residues include aspartate 95, aspartate 144, asparagine 183, and histidine 323. The helical transmembrane segment at 392–412 (IRMYLWGLLFSAAFIAYMHFF) threads the bilayer. The Cytoplasmic segment spans residues 413–465 (PKSFNNRVATIMNRVFTRPDGNTSDLPLPTSISKSKSKKSLTHSKYAVNDTRS). A helical membrane pass occupies residues 466-486 (IKQFLVNAIVLFVSVMPIFIY). Residues 487 to 491 (FYTVV) are Extracellular-facing.

The protein belongs to the metallophosphoesterase superfamily. MPPE1 family. A divalent metal cation serves as cofactor.

It is found in the membrane. Its function is as follows. Probable metallophosphoesterase which may participate in recombinational repair of double -strand breaks. This Saccharomyces cerevisiae (strain ATCC 204508 / S288c) (Baker's yeast) protein is Cell division control protein 1 (CDC1).